Here is a 566-residue protein sequence, read N- to C-terminus: MANSEADKLFKEFKIQSVSEFFRRNAAMLGYTGKLRSLTTLIHEAVTNSLDACEEAGILPYVRVEIEELGTEHYKIIVEDNGPGIPEKFIAHVFGKMLAGTKAHRNIQSRGQQGIGISGAVMFAQITSGKATRIITSTGEEEIIEAWVGIDVDKNEGKIFKKIKHPNPTGWRGTRIEMEVKDVRYIRSKQGVYWYLKLTAIANPHAHIEFIEPDGKLIVFSRSSEELPEPPEEMKPHPKGIITDDIYRMAQRTTRTTVRTFLIGEFSRISDKKIDELVQYITALRLIKEEEEQNVKEQLMKRLVDGEVDKIIASFGKRGKKVLREVRKIMEKPPKKLTWHEAEEIVEAFKYMTFLAPPTHGLRPIGEENIEKGLTGILRPEFVTSVTRPPKVYRGGIPFQVEVGLAFGGELSSGFDLLRYANRVPLLFDAGSCVITSAARNIDWKRYRVDDVDRAPLALLVNVVSVHVPYTSTGKQSVANEEEIYEEIRLAVMDVARRLAKYLGGKHRKLYQVKRRKTLEKYVPEVSRALSILTGLPEGEIKKMLVTIIEKKFESIDEAVEAESDA.

ATP contacts are provided by residues N48, D80, 101 to 102, 111 to 118, and K475; these read TK and GQQGIGIS.

This sequence belongs to the TOP6B family. Homodimer. Heterotetramer of two Top6A and two Top6B chains.

It catalyses the reaction ATP-dependent breakage, passage and rejoining of double-stranded DNA.. Its function is as follows. Relaxes both positive and negative superturns and exhibits a strong decatenase activity. The sequence is that of Type 2 DNA topoisomerase 6 subunit B from Thermococcus sibiricus (strain DSM 12597 / MM 739).